The sequence spans 245 residues: Ubiquinone/menaquinone biosynthesis C-methyltransferase UbiE (245 aa).

S-adenosyl-L-methionine-binding positions include Thr-71, Asp-92, and 118-119; that span reads DA.

The protein belongs to the class I-like SAM-binding methyltransferase superfamily. MenG/UbiE family.

It catalyses the reaction a 2-demethylmenaquinol + S-adenosyl-L-methionine = a menaquinol + S-adenosyl-L-homocysteine + H(+). The catalysed reaction is a 2-methoxy-6-(all-trans-polyprenyl)benzene-1,4-diol + S-adenosyl-L-methionine = a 5-methoxy-2-methyl-3-(all-trans-polyprenyl)benzene-1,4-diol + S-adenosyl-L-homocysteine + H(+). It participates in quinol/quinone metabolism; menaquinone biosynthesis; menaquinol from 1,4-dihydroxy-2-naphthoate: step 2/2. The protein operates within cofactor biosynthesis; ubiquinone biosynthesis. In terms of biological role, methyltransferase required for the conversion of demethylmenaquinol (DMKH2) to menaquinol (MKH2) and the conversion of 2-polyprenyl-6-methoxy-1,4-benzoquinol (DDMQH2) to 2-polyprenyl-3-methyl-6-methoxy-1,4-benzoquinol (DMQH2). In Neisseria meningitidis serogroup C / serotype 2a (strain ATCC 700532 / DSM 15464 / FAM18), this protein is Ubiquinone/menaquinone biosynthesis C-methyltransferase UbiE.